Consider the following 92-residue polypeptide: UPF0250 protein VV0902 (92 aa).

It belongs to the UPF0250 family.

This Vibrio vulnificus (strain YJ016) protein is UPF0250 protein VV0902.